A 141-amino-acid chain; its full sequence is Large ribosomal subunit protein uL11 (141 aa).

This sequence belongs to the universal ribosomal protein uL11 family. In terms of assembly, part of the ribosomal stalk of the 50S ribosomal subunit. Interacts with L10 and the large rRNA to form the base of the stalk. L10 forms an elongated spine to which L12 dimers bind in a sequential fashion forming a multimeric L10(L12)X complex. Post-translationally, one or more lysine residues are methylated.

Its function is as follows. Forms part of the ribosomal stalk which helps the ribosome interact with GTP-bound translation factors. The sequence is that of Large ribosomal subunit protein uL11 from Synechococcus sp. (strain CC9311).